Here is a 62-residue protein sequence, read N- to C-terminus: Large ribosomal subunit protein uL29 (62 aa).

This sequence belongs to the universal ribosomal protein uL29 family.

The protein is Large ribosomal subunit protein uL29 of Desulfosudis oleivorans (strain DSM 6200 / JCM 39069 / Hxd3) (Desulfococcus oleovorans).